The sequence spans 407 residues: Accessory Sec system protein translocase subunit SecY2 (407 aa).

Helical transmembrane passes span Phe13–Phe33, Leu65–Val85, Met104–Leu124, Thr133–Leu153, Ala158–Pro178, Ile190–Val210, Ile248–Leu268, Pro287–Ile307, Phe345–Leu365, and Tyr370–Ile390.

It belongs to the SecY/SEC61-alpha family. SecY2 subfamily. As to quaternary structure, component of the accessory SecA2/SecY2 protein translocase complex required to export cell wall proteins. May form heterotrimers with SecE and SecG subunits.

The protein localises to the cell membrane. In terms of biological role, part of the accessory SecA2/SecY2 system specifically required for export of possible cell wall proteins. The central subunit of a protein translocation channel. In Streptococcus sanguinis (strain SK36), this protein is Accessory Sec system protein translocase subunit SecY2.